Here is a 391-residue protein sequence, read N- to C-terminus: Candidapepsin-1 (391 aa).

A signal peptide spans 1-18 (MFLKNIFIALAIALLVDA). A propeptide spans 19–50 (SPAKRSPGFVTLDFDVIKTPVNATGQEGKVKR) (activation peptide). An N-linked (GlcNAc...) asparagine glycan is attached at Asn-40. Residues 64–377 (YAADITIGSN…DLDDDKISLA (314 aa)) form the Peptidase A1 domain. The active site involves Asp-82. Cys-97 and Cys-109 form a disulfide bridge. Asp-267 is a catalytic residue. A disulfide bridge connects residues Cys-305 and Cys-343.

It belongs to the peptidase A1 family. In terms of processing, O-glycosylated.

Its subcellular location is the secreted. The enzyme catalyses Preferential cleavage at the carboxyl of hydrophobic amino acids, but fails to cleave 15-Leu-|-Tyr-16, 16-Tyr-|-Leu-17 and 24-Phe-|-Phe-25 of insulin B chain. Activates trypsinogen, and degrades keratin.. This is Candidapepsin-1 (SAP1) from Candida albicans (strain WO-1) (Yeast).